Consider the following 366-residue polypeptide: Chalcone synthase B (366 aa).

The active site involves cysteine 172.

It belongs to the thiolase-like superfamily. Chalcone/stilbene synthases family.

The enzyme catalyses (E)-4-coumaroyl-CoA + 3 malonyl-CoA + 3 H(+) = 2',4,4',6'-tetrahydroxychalcone + 3 CO2 + 4 CoA. It participates in secondary metabolite biosynthesis; flavonoid biosynthesis. Functionally, the primary product of this enzyme is 4,2',4',6'-tetrahydroxychalcone (also termed naringenin-chalcone or chalcone) which can under specific conditions spontaneously isomerize into naringenin. In Ipomoea trifida (Morning glory), this protein is Chalcone synthase B (CHSB).